The following is a 1384-amino-acid chain: DNA-directed RNA polymerase subunit beta (1384 aa).

The protein belongs to the RNA polymerase beta chain family. In terms of assembly, the RNAP catalytic core consists of 2 alpha, 1 beta, 1 beta' and 1 omega subunit. When a sigma factor is associated with the core the holoenzyme is formed, which can initiate transcription.

It catalyses the reaction RNA(n) + a ribonucleoside 5'-triphosphate = RNA(n+1) + diphosphate. Its function is as follows. DNA-dependent RNA polymerase catalyzes the transcription of DNA into RNA using the four ribonucleoside triphosphates as substrates. The sequence is that of DNA-directed RNA polymerase subunit beta from Xylella fastidiosa (strain M12).